The sequence spans 210 residues: Large ribosomal subunit protein uL3 (210 aa).

The protein belongs to the universal ribosomal protein uL3 family. In terms of assembly, part of the 50S ribosomal subunit. Forms a cluster with proteins L14 and L19.

Functionally, one of the primary rRNA binding proteins, it binds directly near the 3'-end of the 23S rRNA, where it nucleates assembly of the 50S subunit. This chain is Large ribosomal subunit protein uL3, found in Lawsonia intracellularis (strain PHE/MN1-00).